A 357-amino-acid chain; its full sequence is 3-isopropylmalate dehydrogenase (357 aa).

76-89 provides a ligand contact to NAD(+); sequence GPQWDTIDPALRPE. Substrate contacts are provided by arginine 96, arginine 106, arginine 134, and aspartate 224. The Mg(2+) site is built by aspartate 224, aspartate 248, and aspartate 252. 282-294 provides a ligand contact to NAD(+); that stretch reads GSAPDIAGQGVAN.

The protein belongs to the isocitrate and isopropylmalate dehydrogenases family. LeuB type 1 subfamily. As to quaternary structure, homodimer. It depends on Mg(2+) as a cofactor. Requires Mn(2+) as cofactor.

It is found in the cytoplasm. It carries out the reaction (2R,3S)-3-isopropylmalate + NAD(+) = 4-methyl-2-oxopentanoate + CO2 + NADH. It functions in the pathway amino-acid biosynthesis; L-leucine biosynthesis; L-leucine from 3-methyl-2-oxobutanoate: step 3/4. Its function is as follows. Catalyzes the oxidation of 3-carboxy-2-hydroxy-4-methylpentanoate (3-isopropylmalate) to 3-carboxy-4-methyl-2-oxopentanoate. The product decarboxylates to 4-methyl-2 oxopentanoate. The protein is 3-isopropylmalate dehydrogenase of Xylella fastidiosa (strain Temecula1 / ATCC 700964).